A 234-amino-acid chain; its full sequence is Iron-sulfur cluster co-chaperone protein HscB (234 aa).

Positions 40, 43, 57, and 60 each coordinate a divalent metal cation. The 73-residue stretch at 71–143 (DYFSLMNCNR…LTRGLYLLKL (73 aa)) folds into the J domain.

It belongs to the HscB family. In terms of assembly, interacts with ISCU and HSPA9 to form an iron-sulfur transfer complex. Interacts with SDHAF1 (via the first LYR motif); the interaction recruits the iron-sulfur transfer complex composed of HSC20, HSPA9 and ISCU and mediates the incorporation of iron-sulfur clusters into SDHB which also interacts with HSC20. Interacts with the cytoplasmic form of ISCU and with CIA complex member CIAO1 (via LYR motif). As to quaternary structure, homodimer. Interacts with ISCU (cytoplasmic form); this interaction stabilizes the (Fe-S) clusters on ISCU. Interacts with the CIA complex member CIAO1 (via LYR motif).

The protein resides in the cytoplasm. Its subcellular location is the mitochondrion. It participates in cofactor biosynthesis; iron-sulfur cluster biosynthesis. Functionally, acts as a co-chaperone in iron-sulfur cluster assembly in mitochondria. Required for incorporation of iron-sulfur clusters into SDHB, the iron-sulfur protein subunit of succinate dehydrogenase that is involved in complex II of the mitochondrial electron transport chain. Recruited to SDHB by interaction with SDHAF1 which first binds SDHB and then recruits the iron-sulfur transfer complex formed by HSC20, HSPA9 and ISCU through direct binding to HSC20. Plays an essential role in hematopoiesis. In terms of biological role, acts as a co-chaperone in iron-sulfur cluster assembly in the cytoplasm. Also mediates complex formation between components of the cytosolic iron-sulfur biogenesis pathway and the CIA targeting complex composed of CIAO1, DIPK1B/FAM69B and MMS19 by binding directly to the scaffold protein ISCU and to CIAO1. This facilitates iron-sulfur cluster insertion into a number of cytoplasmic and nuclear proteins including POLD1, ELP3, DPYD and PPAT. This Mus musculus (Mouse) protein is Iron-sulfur cluster co-chaperone protein HscB.